The primary structure comprises 140 residues: Nucleoside diphosphate kinase (140 aa).

6 residues coordinate ATP: K11, F59, R87, T93, R104, and N114. The active-site Pros-phosphohistidine intermediate is H117.

It belongs to the NDK family. As to quaternary structure, homotetramer. The cofactor is Mg(2+).

The protein resides in the cytoplasm. It catalyses the reaction a 2'-deoxyribonucleoside 5'-diphosphate + ATP = a 2'-deoxyribonucleoside 5'-triphosphate + ADP. It carries out the reaction a ribonucleoside 5'-diphosphate + ATP = a ribonucleoside 5'-triphosphate + ADP. Its function is as follows. Major role in the synthesis of nucleoside triphosphates other than ATP. The ATP gamma phosphate is transferred to the NDP beta phosphate via a ping-pong mechanism, using a phosphorylated active-site intermediate. The protein is Nucleoside diphosphate kinase of Roseobacter denitrificans (strain ATCC 33942 / OCh 114) (Erythrobacter sp. (strain OCh 114)).